The sequence spans 290 residues: MKVIVFLLVLLEMQRVIQNQPFPGTGELPMTRRPPKRELEYWCTYARSCDFCWNCRHGVCKNKVFEKHPLIKKNDYIQICRVSRYGEKCSYFTDSKIRRFHIMSCTNPTYYDWFDELMQVKEDRIIDVENIKHTCLCMVATIALMVYIRKQYSRMRMQAATRLLIFLGIYLLLGILMTNIIMNLPLSTDNPMQMRRPPKEDLKFWCTYAKHCDFCWTCKDGMCKNKVFSDHPIITQNDYIVNCTVSRWHDRCMYEAHFRIHYQHNMNCSQPKDLEWFIELKRHVINQDDL.

The next 3 membrane-spanning stretches (helical) occupy residues 1 to 19, 128 to 148, and 163 to 183; these read MKVIVFLLVLLEMQRVIQN, VENIKHTCLCMVATIALMVYI, and LLIFLGIYLLLGILMTNIIMN. N-linked (GlcNAc...) asparagine; by host glycans are attached at residues Asn-242 and Asn-267.

This sequence belongs to the asfivirus MGF 110 family.

The protein resides in the host membrane. Functionally, plays a role in virus cell tropism, and may be required for efficient virus replication in macrophages. The protein is Protein MGF 110-9L of Ornithodoros (relapsing fever ticks).